Consider the following 688-residue polypeptide: MMLSHWVLLLSLGAVWLAEGGEISPGSCTFENSTCAYTSAFPFLQWTVNIEGHYVSVDSSNGLRGQKAVLISPDLHLAEWSCLRLVYQIAGSESSPSPSSLNVFVRPEGESFDYLLWSAEEHSDSWLISSIDLKNTTKRFKIILEGVLGENTMSSIAIFEVKMTTGYCIECDFEENHLCGYMNSWNPNVNWFVGGGNVKNSHSILPRDHTLNNELGHYMYVDSVYVKHFQEVAQLVSPLIITPISGCLSFYYQLQRETSNIFLVHTRDLHGSYDEIWKMGAVRQGEWNLAEVDLNAHVPLEVIFEVAFNGIQAGYVALDDILFSPVSCSGQEGMFFDAREAGCDFEEGMCQFHQDDNNGSGWSRVKVKPNAYQMGDHTTGLGYFMIANTRFTGQPAYFGRLYGPSLPGNIQYCIRFFYSLYGFYKTIDSLAVYIFEENHVVQEKIWSAHETPKGVWLQAEISIHKPMPFKVVFVSWCKSLWDCGIAALDDISVSIGSCKISDRIPPLPGKCTFEKNDCGFEQEWQRRGIWHRIQGRTPTFYTGPNGDHTSGVGYYMYIEATNMVFGQKAKLISRPLRAVAGKQCLTFYYHMYGAGTGLLNVYLTKEGDINKDTLLWTRKGEQSITWLKAQMEYESEQQHKIVFEAVRGISIRSDIAIDDILFQNGPCNDSSDPLQSSGYSDNFNNIEF.

The N-terminal stretch at 1-20 (MMLSHWVLLLSLGAVWLAEG) is a signal peptide. MAM domains lie at 26-169 (GSCT…GYCI), 170-330 (ECDF…SCSG), 341-500 (AGCD…SCKI), and 509-669 (GKCT…PCND). Residues Asn32 and Asn135 are each glycosylated (N-linked (GlcNAc...) asparagine). Residues Asn358 and Asn668 are each glycosylated (N-linked (GlcNAc...) asparagine).

It is found in the membrane. Its subcellular location is the secreted. The protein localises to the extracellular space. This is Thyroid hormone-induced protein B from Xenopus laevis (African clawed frog).